The following is a 435-amino-acid chain: T-box transcription factor T (435 aa).

Residues Leu-51–Asp-219 constitute a DNA-binding region (T-box). Disordered stretches follow at residues Pro-280 to Cys-310 and Ala-384 to Asp-412. Residues Arg-297 to Cys-310 show a composition bias toward polar residues.

In terms of assembly, monomer. Binds DNA as a monomer.

It is found in the nucleus. In terms of biological role, involved in the transcriptional regulation of genes required for mesoderm formation and differentiation. Binds to a palindromic site (called T site) and activates gene transcription when bound to such a site. The protein is T-box transcription factor T of Canis lupus familiaris (Dog).